We begin with the raw amino-acid sequence, 602 residues long: DNA mismatch repair protein MutL (602 aa).

This sequence belongs to the DNA mismatch repair MutL/HexB family.

This protein is involved in the repair of mismatches in DNA. It is required for dam-dependent methyl-directed DNA mismatch repair. May act as a 'molecular matchmaker', a protein that promotes the formation of a stable complex between two or more DNA-binding proteins in an ATP-dependent manner without itself being part of a final effector complex. The sequence is that of DNA mismatch repair protein MutL from Geotalea uraniireducens (strain Rf4) (Geobacter uraniireducens).